The primary structure comprises 293 residues: Ethanolamine ammonia-lyase small subunit (293 aa).

Adenosylcob(III)alamin contacts are provided by Val207 and Glu228.

This sequence belongs to the EutC family. In terms of assembly, the basic unit is a heterodimer which dimerizes to form tetramers. The heterotetramers trimerize; 6 large subunits form a core ring with 6 small subunits projecting outwards. Requires adenosylcob(III)alamin as cofactor.

The protein localises to the bacterial microcompartment. The enzyme catalyses ethanolamine = acetaldehyde + NH4(+). The protein operates within amine and polyamine degradation; ethanolamine degradation. Functionally, catalyzes the deamination of various vicinal amino-alcohols to oxo compounds. Allows this organism to utilize ethanolamine as the sole source of nitrogen and carbon in the presence of external vitamin B12. This Listeria innocua serovar 6a (strain ATCC BAA-680 / CLIP 11262) protein is Ethanolamine ammonia-lyase small subunit.